Consider the following 370-residue polypeptide: 3-isopropylmalate dehydrogenase (370 aa).

An NAD(+)-binding site is contributed by 77 to 90 (GPKWDGVPYDARPE). Arginine 97, arginine 107, arginine 135, and aspartate 226 together coordinate substrate. Positions 226, 250, and 254 each coordinate Mg(2+). 290 to 302 (GSAPDIAGKGMAN) contributes to the NAD(+) binding site.

It belongs to the isocitrate and isopropylmalate dehydrogenases family. LeuB type 1 subfamily. Homodimer. Requires Mg(2+) as cofactor. It depends on Mn(2+) as a cofactor.

The protein resides in the cytoplasm. The enzyme catalyses (2R,3S)-3-isopropylmalate + NAD(+) = 4-methyl-2-oxopentanoate + CO2 + NADH. It participates in amino-acid biosynthesis; L-leucine biosynthesis; L-leucine from 3-methyl-2-oxobutanoate: step 3/4. Catalyzes the oxidation of 3-carboxy-2-hydroxy-4-methylpentanoate (3-isopropylmalate) to 3-carboxy-4-methyl-2-oxopentanoate. The product decarboxylates to 4-methyl-2 oxopentanoate. In Rhodopseudomonas palustris (strain ATCC BAA-98 / CGA009), this protein is 3-isopropylmalate dehydrogenase.